A 248-amino-acid polypeptide reads, in one-letter code: 2,3-bisphosphoglycerate-dependent phosphoglycerate mutase (248 aa).

Substrate-binding positions include 8 to 15 (RHGESLWN), 21 to 22 (TG), arginine 60, 87 to 90 (ERHY), lysine 98, 114 to 115 (RR), and 183 to 184 (GN). Histidine 9 (tele-phosphohistidine intermediate) is an active-site residue. Residue glutamate 87 is the Proton donor/acceptor of the active site.

The protein belongs to the phosphoglycerate mutase family. BPG-dependent PGAM subfamily.

It catalyses the reaction (2R)-2-phosphoglycerate = (2R)-3-phosphoglycerate. It participates in carbohydrate degradation; glycolysis; pyruvate from D-glyceraldehyde 3-phosphate: step 3/5. Functionally, catalyzes the interconversion of 2-phosphoglycerate and 3-phosphoglycerate. The chain is 2,3-bisphosphoglycerate-dependent phosphoglycerate mutase from Methanospirillum hungatei JF-1 (strain ATCC 27890 / DSM 864 / NBRC 100397 / JF-1).